The chain runs to 479 residues: Sulfate adenylyltransferase subunit 1 (479 aa).

One can recognise a tr-type G domain in the interval 22 to 238; sequence KDMLRFLTCG…DSMDISKEPK (217 aa). The segment at 31 to 38 is G1; sequence GSVDDGKS. GTP is bound at residue 31–38; it reads GSVDDGKS. A G2 region spans residues 89–93; that stretch reads GITID. The G3 stretch occupies residues 110 to 113; sequence DTPG. GTP is bound by residues 110 to 114 and 165 to 168; these read DTPGH and NKMD. The interval 165–168 is G4; it reads NKMD. The interval 202 to 204 is G5; it reads SAL.

It belongs to the TRAFAC class translation factor GTPase superfamily. Classic translation factor GTPase family. CysN/NodQ subfamily. In terms of assembly, heterodimer composed of CysD, the smaller subunit, and CysN.

The enzyme catalyses sulfate + ATP + H(+) = adenosine 5'-phosphosulfate + diphosphate. The protein operates within sulfur metabolism; hydrogen sulfide biosynthesis; sulfite from sulfate: step 1/3. In terms of biological role, with CysD forms the ATP sulfurylase (ATPS) that catalyzes the adenylation of sulfate producing adenosine 5'-phosphosulfate (APS) and diphosphate, the first enzymatic step in sulfur assimilation pathway. APS synthesis involves the formation of a high-energy phosphoric-sulfuric acid anhydride bond driven by GTP hydrolysis by CysN coupled to ATP hydrolysis by CysD. The polypeptide is Sulfate adenylyltransferase subunit 1 (Sulfurovum sp. (strain NBC37-1)).